The sequence spans 194 residues: UPF0215 protein DR_A0167 (194 aa).

The protein belongs to the UPF0215 family.

This chain is UPF0215 protein DR_A0167, found in Deinococcus radiodurans (strain ATCC 13939 / DSM 20539 / JCM 16871 / CCUG 27074 / LMG 4051 / NBRC 15346 / NCIMB 9279 / VKM B-1422 / R1).